Reading from the N-terminus, the 360-residue chain is MQADMHGKLHAALEDGFFLFPFEQQQQPNIYYDTTTDQEDRPCFSFGSTISPRSWHFEKSDKIASSQLQNLVHTQPIHLINPQILFNEEFLNLENIDSQPISKETKTTKDCTMATGPERGKKSSESTRSSSLSSLFSNDESASTFHSSFNNHDNFQKSNRNGDDIDISDTIKYETNTNAQKDIKIFQENFEFNEFPYTQDFYPYTTNYTYSKPTNIHESINSKNTDSYSQYQDQFPPHTDNIHSFNNRHYSNHKSTNCNYYNNTSNNNNASDNVYEADPFIDEPQVPSYYYPLEIAFDVEKSPPPSLQKLNSKELEFLKKLNSKLSRYAAAYSFSSSNDQDYYDKVRFQEISYKFSKTYS.

A disordered region spans residues 102 to 135 (SKETKTTKDCTMATGPERGKKSSESTRSSSLSSL). Residues 126–135 (STRSSSLSSL) are compositionally biased toward low complexity.

Interacts with UME6.

It localises to the nucleus. Transcription factor required for sporulation and for early sporulation-specific genes expression. Positive regulator of SME1/IME2 expression. Directly activates expression of SLZ1 during meiosis. The sequence is that of Meiosis-inducing protein 1 (IME1) from Saccharomyces cerevisiae (strain ATCC 204508 / S288c) (Baker's yeast).